A 431-amino-acid polypeptide reads, in one-letter code: Enolase (431 aa).

Gln-167 contributes to the (2R)-2-phosphoglycerate binding site. The active-site Proton donor is the Glu-209. Residues Asp-246, Glu-289, and Asp-316 each contribute to the Mg(2+) site. Positions 341, 370, 371, and 392 each coordinate (2R)-2-phosphoglycerate. Lys-341 acts as the Proton acceptor in catalysis.

The protein belongs to the enolase family. Component of the RNA degradosome, a multiprotein complex involved in RNA processing and mRNA degradation. Requires Mg(2+) as cofactor.

It localises to the cytoplasm. It is found in the secreted. The protein resides in the cell surface. The enzyme catalyses (2R)-2-phosphoglycerate = phosphoenolpyruvate + H2O. It functions in the pathway carbohydrate degradation; glycolysis; pyruvate from D-glyceraldehyde 3-phosphate: step 4/5. Its function is as follows. Catalyzes the reversible conversion of 2-phosphoglycerate (2-PG) into phosphoenolpyruvate (PEP). It is essential for the degradation of carbohydrates via glycolysis. This is Enolase from Shewanella pealeana (strain ATCC 700345 / ANG-SQ1).